The primary structure comprises 287 residues: Bifunctional protein FolD (287 aa).

NADP(+) contacts are provided by residues 166 to 168 and I232; that span reads GAS.

This sequence belongs to the tetrahydrofolate dehydrogenase/cyclohydrolase family. Homodimer.

The catalysed reaction is (6R)-5,10-methylene-5,6,7,8-tetrahydrofolate + NADP(+) = (6R)-5,10-methenyltetrahydrofolate + NADPH. It catalyses the reaction (6R)-5,10-methenyltetrahydrofolate + H2O = (6R)-10-formyltetrahydrofolate + H(+). It functions in the pathway one-carbon metabolism; tetrahydrofolate interconversion. Catalyzes the oxidation of 5,10-methylenetetrahydrofolate to 5,10-methenyltetrahydrofolate and then the hydrolysis of 5,10-methenyltetrahydrofolate to 10-formyltetrahydrofolate. The sequence is that of Bifunctional protein FolD from Chromohalobacter salexigens (strain ATCC BAA-138 / DSM 3043 / CIP 106854 / NCIMB 13768 / 1H11).